Here is a 473-residue protein sequence, read N- to C-terminus: MLRFRCILSTSRSIMSGVKEFDYLVIGGGSGGIASARRAREFGVSVGLIESGRLGGTCVNVGCVPKKVMYNCSLHAEFIRDHADYGFDVTLNKFDWKVIKKSRDEYIKRLNGLYESGLKGSSVEYIRGRATFAEDGTVEVNGAKYRGKNTLIAVGGKPTIPNIKGAEHGIDSDGFFDLEDLPSRTVVVGAGYIAVEIAGVLANLGSDTHLLIRYDKVLRTFDKMLSDELTADMDEETNPLHLHKNTQVTEVIKGDDGLLTIKTTTGVIEKVQTLIWAIGRDPLTKELNLERVGVKTDKSGHIIVDEYQNTSAPGILSVGDDTGKFLLTPVAIAAGRRLSHRLFNGETDNKLTYENIATVVFSHPLIGTVGLTEAEAVEKYGKDEVTLYKSRFNPMLFAVTKHKEKAAMKLVCVGKDEKVVGVHVFGVGSDEMLQGFAVAVTMGATKKQFDQTVAIHPTSAEELVTMRGGVKPE.

FAD contacts are provided by Ser-30 and Gly-31. Ser-30 provides a ligand contact to glutathione. Arg-37 is a binding site for glutathione. FAD-binding residues include Glu-50, Thr-57, Cys-58, and Lys-66. Cys-58 and Cys-63 are joined by a disulfide. Tyr-114 provides a ligand contact to glutathione. Ala-130 contributes to the FAD binding site. The NADP(+) site is built by Ala-190, Ile-193, Glu-196, Arg-213, Arg-219, and Gly-279. Asp-320 contributes to the FAD binding site. Leu-326 provides a ligand contact to NADP(+). Thr-328 serves as a coordination point for FAD. Arg-336 is a binding site for glutathione. An NADP(+)-binding site is contributed by Val-359. An FAD-binding site is contributed by His-456. His-456 serves as the catalytic Proton acceptor.

It belongs to the class-I pyridine nucleotide-disulfide oxidoreductase family. FAD serves as cofactor. Expressed at all larval stages and in adults in intestine, vulva muscle, pharynx and some cells in the tail.

Its subcellular location is the cytoplasm. The protein localises to the mitochondrion. The enzyme catalyses 2 glutathione + NADP(+) = glutathione disulfide + NADPH + H(+). In terms of biological role, catalyzes the reduction of glutathione disulfide (GSSG) to reduced glutathione (GSH). Constitutes the major mechanism to maintain a high GSH:GSSG ratio in the cytosol. Involved in resistance to oxidative stress and starvation. Together with thioredoxin reductase txtr-1, required for the reduction of disulfide groups in the cuticle during molting. This Caenorhabditis elegans protein is Glutathione reductase, mitochondrial.